The primary structure comprises 85 residues: Arminin 2b (85 aa).

Positions 1–18 (MKTVFAILFLAFIALTYA) are cleaved as a signal peptide. Positions 19 to 57 (RSYEDVKEEIKNEIEKEILEDLEEESDELNDKSKEINDA) are excised as a propeptide. The residue at position 82 (Ala-82) is an Alanine amide.

Belongs to the arminin family. In terms of tissue distribution, expressed in entodermal epithelium along the body column.

The protein localises to the secreted. Its subcellular location is the target cell membrane. Functionally, antimicrobial peptide with a broad-spectrum antimicrobial activity. Keeps its antibacterial activity under a wide range of salt concentrations that mimic physiological conditions of human blood, which is surprising, since Hydra is an obligate freshwater animal with nearly no salt tolerance. Does not affect red blood cells. This Hydra vulgaris (Hydra) protein is Arminin 2b.